The sequence spans 119 residues: Small ribosomal subunit protein uS13 (119 aa).

The interval 93-119 (RRGLPLRGQRTRSNARTRKGKRKPIRS) is disordered.

This sequence belongs to the universal ribosomal protein uS13 family. Part of the 30S ribosomal subunit. Forms a loose heterodimer with protein S19. Forms two bridges to the 50S subunit in the 70S ribosome.

In terms of biological role, located at the top of the head of the 30S subunit, it contacts several helices of the 16S rRNA. In the 70S ribosome it contacts the 23S rRNA (bridge B1a) and protein L5 of the 50S subunit (bridge B1b), connecting the 2 subunits; these bridges are implicated in subunit movement. Contacts the tRNAs in the A and P-sites. This is Small ribosomal subunit protein uS13 from Coxiella burnetii (strain RSA 493 / Nine Mile phase I).